The chain runs to 1356 residues: RHO1 GDP-GTP exchange protein 2 (1356 aa).

Ser-2 carries the N-acetylserine modification. Disordered stretches follow at residues 74–94 (RRSGVEAAIDDSDIPNNEMKG) and 109–175 (EVPD…PRNE). A Phosphoserine modification is found at Ser-76. Polar residues-rich tracts occupy residues 109 to 125 (EVPDTQSLSSADNTPVS) and 147 to 157 (HIYSTSNSASR). Ser-193 is subject to Phosphoserine. Disordered stretches follow at residues 202 to 291 (LKKQ…RSMS), 303 to 362 (SFQS…SSSN), 383 to 409 (SVSGTSLSSPRRSSMTPLSASRPVMSA), 531 to 571 (GNHS…SQQK), and 626 to 645 (NISMALDDDDEEKPSWTSSV). Polar residues predominate over residues 204-221 (KQSSFSTGSASTTPTQAR). At Ser-223 the chain carries Phosphoserine. Basic and acidic residues predominate over residues 235–244 (SSKDLHEQHQ). Residues 250-265 (QHNNINNHNNNNTNNN) show a composition bias toward low complexity. Polar residues predominate over residues 271–281 (VGSSNSNYPQH). The segment covering 282 to 291 (SHSISSRSMS) has biased composition (low complexity). Residues 303–325 (SFQSKTSNSRKATQKYDITSNPF) are compositionally biased toward polar residues. Positions 329-338 (HHHHHHHHSS) are enriched in basic residues. Composition is skewed to low complexity over residues 339–362 (NSHSSLNNVHGSGNSSSVMGSSSN) and 383–401 (SVSGTSLSSPRRSSMTPLS). 2 positions are modified to phosphoserine: Ser-566 and Ser-628. The 188-residue stretch at 659 to 846 (KRQEAIYEVY…RDFMKRIDQA (188 aa)) folds into the DH domain. The CNH domain maps to 1034–1336 (TNKINSVTSC…RLLQTSTQEI (303 aa)).

In terms of biological role, stimulates the exchange of RHO1 GDP-bound form into GTP-bound form. This Saccharomyces cerevisiae (strain ATCC 204508 / S288c) (Baker's yeast) protein is RHO1 GDP-GTP exchange protein 2 (ROM2).